The following is a 739-amino-acid chain: MDKVTPAKLSWREDELGNVVPVSEIFGDVYYSLVDGLNESRYVFLTQNKLPERFEALFSRANSSAASNFSIAELGFGTGLNILATWQLWEHSKQQFHTYFNSQTNLQTSSQDHLKGSRSLTPRLHIISTEKHPLTHADLSRSLESWKHKDTSLVPFVDQLLALYPTLISGCHRLQLAEDVTLDLWLGDACFSLQQLANSYDTLPYGAHIDAWYLDGFAPACNESLWADQIFEQVKRLSKPGTTAATFSSAGVVKRGLMAAGFEIKKTKGFGRKREMLTATKLEPVAVSDDTSDNQGATEYDAKSTLALRSKEQVTLDTHAVTPNEQIAVIGAGVCGLMAAWSLAQRGNAVSLIDKEAPLAGASGNPRALLAPKMTPLAHVAEHLHSISYLYSQRFYRQIDQGEHKIFTPTTTLDLLQKSNVDVHQIAEYPEQMATTLSLDSARDISGLQQQDLTANLYLPQSGLINPKALADKVLTHPNISFKQANIKRITPLQAEAFDDVTEVSEVIEVTADITVQPAKRTKVMLHCESGEVLSVNRVVIAAAFESQSLDARIFEFRKIRGQLSWFEPTTEQLQALPTLPLKYSGYCAPFIPQPGDEAVNSVTPSVPTFLLGASFIRNDLDDEIRLSEHAINHQKLLTALPELSAVLPLPDTEADLYQRWQARVGIRSQTPDYHPLVGAVDEQGLIWTLSGMGSKGYAFAPLCAQVLADMMTAQFVPLPAALLAKLSVHRSSLKKPLS.

The interval 1–282 (MDKVTPAKLS…KREMLTATKL (282 aa)) is tRNA (mnm(5)s(2)U34)-methyltransferase. An FAD-dependent cmnm(5)s(2)U34 oxidoreductase region spans residues 330–739 (IGAGVCGLMA…HRSSLKKPLS (410 aa)).

It in the N-terminal section; belongs to the methyltransferase superfamily. tRNA (mnm(5)s(2)U34)-methyltransferase family. The protein in the C-terminal section; belongs to the DAO family. FAD is required as a cofactor.

It localises to the cytoplasm. The catalysed reaction is 5-aminomethyl-2-thiouridine(34) in tRNA + S-adenosyl-L-methionine = 5-methylaminomethyl-2-thiouridine(34) in tRNA + S-adenosyl-L-homocysteine + H(+). Functionally, catalyzes the last two steps in the biosynthesis of 5-methylaminomethyl-2-thiouridine (mnm(5)s(2)U) at the wobble position (U34) in tRNA. Catalyzes the FAD-dependent demodification of cmnm(5)s(2)U34 to nm(5)s(2)U34, followed by the transfer of a methyl group from S-adenosyl-L-methionine to nm(5)s(2)U34, to form mnm(5)s(2)U34. The sequence is that of tRNA 5-methylaminomethyl-2-thiouridine biosynthesis bifunctional protein MnmC from Psychrobacter sp. (strain PRwf-1).